The primary structure comprises 361 residues: DNA polymerase IV 3 (361 aa).

The UmuC domain maps to 12 to 192 (IIHVDMDAFY…LPVNKFHGVG (181 aa)). Residues aspartate 16 and aspartate 110 each coordinate Mg(2+). Residue glutamate 111 is part of the active site.

It belongs to the DNA polymerase type-Y family. As to quaternary structure, monomer. Mg(2+) serves as cofactor.

Its subcellular location is the cytoplasm. It catalyses the reaction DNA(n) + a 2'-deoxyribonucleoside 5'-triphosphate = DNA(n+1) + diphosphate. In terms of biological role, poorly processive, error-prone DNA polymerase involved in untargeted mutagenesis. Copies undamaged DNA at stalled replication forks, which arise in vivo from mismatched or misaligned primer ends. These misaligned primers can be extended by PolIV. Exhibits no 3'-5' exonuclease (proofreading) activity. May be involved in translesional synthesis, in conjunction with the beta clamp from PolIII. The polypeptide is DNA polymerase IV 3 (dinB3) (Mesorhizobium japonicum (strain LMG 29417 / CECT 9101 / MAFF 303099) (Mesorhizobium loti (strain MAFF 303099))).